The following is a 345-amino-acid chain: Adenine deaminase (345 aa).

Zn(2+) contacts are provided by histidine 24, histidine 26, and histidine 204. Residue glutamate 207 is the Proton donor of the active site. Aspartate 285 serves as a coordination point for Zn(2+). Aspartate 286 is a binding site for substrate.

This sequence belongs to the metallo-dependent hydrolases superfamily. Adenosine and AMP deaminases family. Adenine deaminase type 2 subfamily. Zn(2+) is required as a cofactor.

The catalysed reaction is adenine + H2O + H(+) = hypoxanthine + NH4(+). Catalyzes the hydrolytic deamination of adenine to hypoxanthine. Plays an important role in the purine salvage pathway and in nitrogen catabolism. This chain is Adenine deaminase, found in Albidiferax ferrireducens (strain ATCC BAA-621 / DSM 15236 / T118) (Rhodoferax ferrireducens).